An 890-amino-acid polypeptide reads, in one-letter code: Alanine--tRNA ligase (890 aa).

Zn(2+)-binding residues include histidine 564, histidine 568, cysteine 677, and histidine 681.

The protein belongs to the class-II aminoacyl-tRNA synthetase family. Requires Zn(2+) as cofactor.

It localises to the cytoplasm. It catalyses the reaction tRNA(Ala) + L-alanine + ATP = L-alanyl-tRNA(Ala) + AMP + diphosphate. Its function is as follows. Catalyzes the attachment of alanine to tRNA(Ala) in a two-step reaction: alanine is first activated by ATP to form Ala-AMP and then transferred to the acceptor end of tRNA(Ala). Also edits incorrectly charged Ser-tRNA(Ala) and Gly-tRNA(Ala) via its editing domain. The chain is Alanine--tRNA ligase from Rhodopseudomonas palustris (strain BisB18).